A 286-amino-acid polypeptide reads, in one-letter code: 4-diphosphocytidyl-2-C-methyl-D-erythritol kinase (286 aa).

Residue Lys-11 is part of the active site. 93–103 (PFGAGLGGGSS) lines the ATP pocket. Asp-135 is an active-site residue.

Belongs to the GHMP kinase family. IspE subfamily.

It carries out the reaction 4-CDP-2-C-methyl-D-erythritol + ATP = 4-CDP-2-C-methyl-D-erythritol 2-phosphate + ADP + H(+). It participates in isoprenoid biosynthesis; isopentenyl diphosphate biosynthesis via DXP pathway; isopentenyl diphosphate from 1-deoxy-D-xylulose 5-phosphate: step 3/6. In terms of biological role, catalyzes the phosphorylation of the position 2 hydroxy group of 4-diphosphocytidyl-2C-methyl-D-erythritol. In Chlorobaculum parvum (strain DSM 263 / NCIMB 8327) (Chlorobium vibrioforme subsp. thiosulfatophilum), this protein is 4-diphosphocytidyl-2-C-methyl-D-erythritol kinase.